The primary structure comprises 44 residues: Peptide Hact-4 (44 aa).

Cystine bridges form between Cys8/Cys42, Cys15/Cys34, and Cys20/Cys43.

As to expression, expressed in tentacles.

The protein resides in the nematocyst. It is found in the secreted. Peptide with unknown function. Does not exhibit antimicrobial activity against Escherichia coli and Staphylococcus aureus. Does not exhibit any effect on human ion channel TRPV1 in a Xenopus laevis oocytes assay. The polypeptide is Peptide Hact-4 (Heliofungia actiniformis (Mushroom coral)).